The following is a 446-amino-acid chain: Tubulin beta-2 chain (446 aa).

The GTP site is built by glutamine 11, glutamate 69, serine 138, glycine 142, threonine 143, glycine 144, asparagine 204, and asparagine 226. Glutamate 69 contacts Mg(2+). A disordered region spans residues 426-446 (QEAGIDEEEEYEEEAPAEHEE). The span at 429–440 (GIDEEEEYEEEA) shows a compositional bias: acidic residues.

Belongs to the tubulin family. As to quaternary structure, dimer of alpha and beta chains. A typical microtubule is a hollow water-filled tube with an outer diameter of 25 nm and an inner diameter of 15 nM. Alpha-beta heterodimers associate head-to-tail to form protofilaments running lengthwise along the microtubule wall with the beta-tubulin subunit facing the microtubule plus end conferring a structural polarity. Microtubules usually have 13 protofilaments but different protofilament numbers can be found in some organisms and specialized cells. Mg(2+) is required as a cofactor.

It localises to the cytoplasm. The protein localises to the cytoskeleton. In terms of biological role, tubulin is the major constituent of microtubules, a cylinder consisting of laterally associated linear protofilaments composed of alpha- and beta-tubulin heterodimers. Microtubules grow by the addition of GTP-tubulin dimers to the microtubule end, where a stabilizing cap forms. Below the cap, tubulin dimers are in GDP-bound state, owing to GTPase activity of alpha-tubulin. The polypeptide is Tubulin beta-2 chain (Hypocrea virens (Gliocladium virens)).